The primary structure comprises 222 residues: Kinetochore protein Spc25 (222 aa).

Positions 51 to 86 (RHQRKVGKLQKVLMERREELDKRVSFIEELDRELEA) form a coiled coil.

It belongs to the SPC25 family. As to quaternary structure, component of the Ndc80 complex, which is composed of Ndc80, Nuf2 and Spc25.

Its subcellular location is the nucleus. It is found in the chromosome. The protein resides in the centromere. It localises to the kinetochore. Acts as a component of the essential kinetochore-associated Ndc80 complex, which is required for chromosome segregation and spindle checkpoint activity during meiosis and mitosis. Required for kinetochore integrity and the organization of stable microtubule binding sites in the outer plate of the kinetochore. Participates in SAC signaling that responds specifically to disruptions in spindle microtubule dynamics. The NDC80 complex synergistically enhances the affinity of the SKA1 complex for microtubules and may allow the NDC80 complex to track depolymerizing microtubules. The polypeptide is Kinetochore protein Spc25 (Drosophila simulans (Fruit fly)).